A 5082-amino-acid polypeptide reads, in one-letter code: Malformin synthetase mlfA (5082 aa).

An adenylation 1 region spans residues 225-616 (ERHAANRPHS…CGRADTQVKL (392 aa)). Positions 749-822 (SRLEQKIQLA…EAASLAEVQE (74 aa)) constitute a Carrier 1 domain. Ser783 carries the post-translational modification O-(pantetheine 4'-phosphoryl)serine. The condensation 1 stretch occupies residues 860 to 1291 (ENVFPCTTMQ…ALNTLSLLQA (432 aa)). The adenylation 2 stretch occupies residues 1319–1708 (DRWVTRQPEG…GRKDTQVKLR (390 aa)). Residues 1846–1923 (TPTLELERTL…QLAAEVGEPA (78 aa)) enclose the Carrier 2 domain. An O-(pantetheine 4'-phosphoryl)serine modification is found at Ser1883. Disordered stretches follow at residues 1924–1953 (GQSASSASSTTEEGFTFSTPDDSSTNDGVD) and 1986–2012 (GGSSSNKTPSVSSSSSSSSSSKRKKNA). Low complexity-rich tracts occupy residues 1926–1950 (SASSASSTTEEGFTFSTPDDSSTND) and 1988–2005 (SSSNKTPSVSSSSSSSSS). Residues 2058-2473 (EDIYPATALQ…AVSCSDKETL (416 aa)) are condensation 2. Residues 2496 to 2888 (RRTPHAPAVC…IGRRDGQLKL (393 aa)) form an adenylation 3 region. Residues 3024-3100 (RPVTSQEHEM…QLICHLNTIR (77 aa)) enclose the Carrier 3 domain. Ser3061 carries the post-translational modification O-(pantetheine 4'-phosphoryl)serine. Condensation regions lie at residues 3117 to 3582 (WVAL…TYDQ) and 3603 to 4022 (NIYP…EHLV). The segment at 4047-4426 (HNSRQAVFDD…VGRKDNQIKF (380 aa)) is adenylation 4. Positions 4560 to 4636 (MPSTAAERKM…DLSDQAKSLI (77 aa)) constitute a Carrier 4 domain. At Ser4597 the chain carries O-(pantetheine 4'-phosphoryl)serine. The condensation 5 stretch occupies residues 4673–5000 (DVLPTTSFQR…LQTIVQHQNN (328 aa)).

This sequence belongs to the NRP synthetase family.

It functions in the pathway secondary metabolite biosynthesis. Functionally, nonribosomal peptide synthetase; part of the gene cluster that mediates the biosynthesis of malformins, cyclic pentapeptides with a disulfide bond between 2 consecutive cysteins, that show potential anti-tumor as well as antimalarial and antitrypanosomal properties. The nonribosomal peptide synthetase mlfA is responsible of the formation of the cyclic pentapeptide. The malformin biosynthesis clusters in malformin-producing fungi also contain enzymes involved in the formation of the disulfide bond between the two consecutive cysteins within malformins, in addition to additional tailoring enzymes such as methyltransferases or oxidoreductases. They are also composed of up to 4 major facilitator superfamily transporters, and transcription factors probably involved in the regulation of the expression of those clusters. This is Malformin synthetase mlfA from Aspergillus luchuensis (strain CBS 106.47).